Consider the following 736-residue polypeptide: Oligopeptide transporter 6 (736 aa).

Transmembrane regions (helical) follow at residues 43–63 (MWVLGIGACIVLSFINQFFWY), 66–86 (MPLSITGISAQIAVVPLGHLM), 116–136 (VLITIFANSGAGSVYATHILS), 148–168 (FLPAFLVMITTQILGFGWAGL), 210–230 (FFLIVLVASFAYYIFPGYLFT), 258–278 (LGIGSIGFDWVTISAYLGSPL), 288–308 (VAIGFVLVMYIVTPVCYWLNI), 357–377 (FFAVTYGLGFATLSATIVHVL), 412–432 (VPLWWFLVILLLNIALIMFIS), 443–463 (WWGVLLACAIAISFTPLIGVI), 489–511 (PVANMCFKVYGYISMTQALTFIS), 527–547 (FMAQVAGTLVAVVVYTGTAWW), 602–622 (WFFLVGAIAPLLVWLATKMFP), 645–665 (ATAVNFTSWLIVAFIFGHFIF), and 678–698 (VLSGGLDAGSAFMTILLFLAL).

The protein belongs to the oligopeptide OPT transporter (TC 2.A.67.1) family. In terms of tissue distribution, expressed in flowers and roots, and at a low level in leaves and stems. Detected in the cambial zone of the vascular bundles and in the region of lateral root initiation. Low expression in the vascular network of the petals and high in the stamen filaments and the gynoecium.

Its subcellular location is the membrane. Functionally, involved in the translocation of tetra- and pentapeptides across the cellular membrane in an energy-dependent manner. Also involved in transport of glutathione derivatives and metal complexes, and may be involved in stress resistance. This chain is Oligopeptide transporter 6 (OPT6), found in Arabidopsis thaliana (Mouse-ear cress).